Reading from the N-terminus, the 1277-residue chain is NPC intracellular cholesterol transporter 1 (1277 aa).

An N-terminal signal peptide occupies residues 1–22; sequence MSARGPAFGLLLLLLCPVQVFS. Residues 23 to 269 are Lumenal-facing; sequence QSCVWYGECG…WRILGLDAMY (247 aa). Intrachain disulfides connect cysteine 25/cysteine 74, cysteine 31/cysteine 42, cysteine 63/cysteine 109, cysteine 75/cysteine 113, cysteine 97/cysteine 238, cysteine 100/cysteine 160, cysteine 177/cysteine 184, cysteine 227/cysteine 243, and cysteine 240/cysteine 247. Position 41 (asparagine 41) interacts with cholesterol. N-linked (GlcNAc...) asparagine glycosylation occurs at asparagine 70. Glutamine 79 serves as a coordination point for cholesterol. Residues asparagine 122 and asparagine 135 are each glycosylated (N-linked (GlcNAc...) asparagine). Positions 175 to 205 are important for cholesterol binding and cholesterol transfer from NPC1 to liposomes; the sequence is LLCGREAQACNATNWIEYMFNKDNGQAPFTI. N-linked (GlcNAc...) asparagine glycosylation is found at asparagine 185 and asparagine 222. A helical membrane pass occupies residues 270-290; it reads VIMWSSYMAFLIVFFGAFFAV. The Cytoplasmic segment spans residues 291-350; sequence WCYRKRYFVSEYTPIDGNIAFSVNSSDKGQAFCCDPLGAAFERGLRRLFAQWGAFCVRHP. The chain crosses the membrane as a helical span at residues 351–371; the sequence is GCVVFFSLAFIVACSSGLVFI. The Lumenal portion of the chain corresponds to 372–621; the sequence is RVTTDPVDLW…ELNRESNSDL (250 aa). 4 N-linked (GlcNAc...) asparagine glycosylation sites follow: asparagine 415, asparagine 452, asparagine 459, and asparagine 478. 2 disulfides stabilise this stretch: cysteine 468–cysteine 479 and cysteine 516–cysteine 533. The region spanning 620 to 785 is the SSD domain; that stretch reads DLFTILISYA…ITCFVSLLGL (166 aa). Residues 622-642 traverse the membrane as a helical segment; that stretch reads FTILISYAIMFLYISIALGHI. At 643–653 the chain is on the cytoplasmic side; sequence KSCSRLLVDSK. A helical transmembrane segment spans residues 654–674; that stretch reads ISLGIAGILIVLSSVACSLGI. The Lumenal segment spans residues 675–677; it reads FSY. A helical membrane pass occupies residues 678–698; sequence IGVPLTLIVIEVIPFLVLAVG. Over 699-734 the chain is Cytoplasmic; it reads VDNIFILVQTYQRDERLQGETLDQQLGRVLGEVAPS. The chain crosses the membrane as a helical span at residues 735–755; the sequence is MFLSSFSETVAFFLGGLSVVP. Residues 756 to 759 lie on the Lumenal side of the membrane; it reads AVHT. Residues 760–780 traverse the membrane as a helical segment; that stretch reads FSLFAGMAVLIDFLLQITCFV. Topologically, residues 781 to 832 are cytoplasmic; the sequence is SLLGLDIKRQEKNRLDVVCCVQGAEDGAGVQASESCLFRFFKNSYAPLLLKD. The chain crosses the membrane as a helical span at residues 833-853; that stretch reads WMRPIVIAVFVGVLSFSIAVL. Residues 854-1097 are Lumenal-facing; it reads NKVEIGLDQS…EQYLTVIDDT (244 aa). N-linked (GlcNAc...) asparagine glycosylation occurs at asparagine 898. A disulfide bond links cysteine 909 and cysteine 914. N-linked (GlcNAc...) asparagine glycosylation is found at asparagine 916, asparagine 931, asparagine 961, asparagine 968, asparagine 1028, and asparagine 1063. Intrachain disulfides connect cysteine 956–cysteine 1011, cysteine 957–cysteine 979, and cysteine 967–cysteine 976. The chain crosses the membrane as a helical span at residues 1098 to 1118; sequence IFNLGVSLGAIFLVTVVLMGC. Over 1119–1123 the chain is Cytoplasmic; sequence ELWAT. Residues 1124–1144 form a helical membrane-spanning segment; that stretch reads VIMCVTIAMILVNMFGVMWLW. Residue glycine 1145 is a topological domain, lumenal. Residues 1146–1166 traverse the membrane as a helical segment; that stretch reads ISLNAVSLVNLVMSCGISVEF. Residues 1167–1194 lie on the Cytoplasmic side of the membrane; sequence CSHITRAFTLSTKGSRVDRAEEALAHMG. The helical transmembrane segment at 1195–1215 threads the bilayer; sequence SSVFSGITLTKFGGIVVLAFA. Residues 1216 to 1226 lie on the Lumenal side of the membrane; the sequence is KSQIFQIFYFR. The helical transmembrane segment at 1227–1247 threads the bilayer; the sequence is MYLAIVLLGATHGLIFLPVLL. At 1248-1277 the chain is on the cytoplasmic side; the sequence is SYIGPSINKAKSLATQERYKGTEREQLLNF. Positions 1274–1277 are required for location in lysosomes; that stretch reads LLNF. The Di-leucine motif signature appears at 1274 to 1277; that stretch reads LLNF.

This sequence belongs to the patched family. As to quaternary structure, interacts (via the second lumenal domain) with NPC2. Interacts with TMEM97; the interaction may decrease NPC1 availability to the cell. Interacts with TIM1. Interacts with SLC38A9; this interaction inhibits cholesterol-mediated mTORC1 activation via its sterol transport activity. N-glycosylated. In terms of tissue distribution, detected in corpus luteum, granulosa cells and adrenal gland.

Its subcellular location is the late endosome membrane. The protein localises to the lysosome membrane. The enzyme catalyses cholesterol(in) = cholesterol(out). Its function is as follows. Intracellular cholesterol transporter which acts in concert with NPC2 and plays an important role in the egress of cholesterol from the endosomal/lysosomal compartment. Unesterified cholesterol that has been released from LDLs in the lumen of the late endosomes/lysosomes is transferred by NPC2 to the cholesterol-binding pocket in the N-terminal domain of NPC1. Cholesterol binds to NPC1 with the hydroxyl group buried in the binding pocket. Binds oxysterol with higher affinity than cholesterol. May play a role in vesicular trafficking in glia, a process that may be crucial for maintaining the structural and functional integrity of nerve terminals. Inhibits cholesterol-mediated mTORC1 activation throught its interaction with SLC38A9. The protein is NPC intracellular cholesterol transporter 1 of Sus scrofa (Pig).